Reading from the N-terminus, the 70-residue chain is DNA-directed RNA polymerase subunit omega (70 aa).

Belongs to the RNA polymerase subunit omega family. In terms of assembly, the RNAP catalytic core consists of 2 alpha, 1 beta, 1 beta' and 1 omega subunit. When a sigma factor is associated with the core the holoenzyme is formed, which can initiate transcription.

It carries out the reaction RNA(n) + a ribonucleoside 5'-triphosphate = RNA(n+1) + diphosphate. Functionally, promotes RNA polymerase assembly. Latches the N- and C-terminal regions of the beta' subunit thereby facilitating its interaction with the beta and alpha subunits. This Bacillus anthracis protein is DNA-directed RNA polymerase subunit omega.